Reading from the N-terminus, the 358-residue chain is Anhydro-N-acetylmuramic acid kinase (358 aa).

9-16 (GTSLDGVD) contacts ATP.

The protein belongs to the anhydro-N-acetylmuramic acid kinase family.

It catalyses the reaction 1,6-anhydro-N-acetyl-beta-muramate + ATP + H2O = N-acetyl-D-muramate 6-phosphate + ADP + H(+). It participates in amino-sugar metabolism; 1,6-anhydro-N-acetylmuramate degradation. Its pathway is cell wall biogenesis; peptidoglycan recycling. Functionally, catalyzes the specific phosphorylation of 1,6-anhydro-N-acetylmuramic acid (anhMurNAc) with the simultaneous cleavage of the 1,6-anhydro ring, generating MurNAc-6-P. Is required for the utilization of anhMurNAc either imported from the medium or derived from its own cell wall murein, and thus plays a role in cell wall recycling. In Acidiphilium cryptum (strain JF-5), this protein is Anhydro-N-acetylmuramic acid kinase.